A 264-amino-acid chain; its full sequence is V-type proton ATPase subunit D (264 aa).

Over residues 214 to 230 (RDNAETDAQMKAKKAEQ) the composition is skewed to basic and acidic residues. The interval 214–264 (RDNAETDAQMKAKKAEQQRLALADSENAEGEQTENTPADILAAEEDEDVIF) is disordered. The span at 255-264 (AAEEDEDVIF) shows a compositional bias: acidic residues.

It belongs to the V-ATPase D subunit family. In terms of assembly, V-ATPase is a heteromultimeric enzyme composed of a peripheral catalytic V1 complex (components A to H) attached to an integral membrane V0 proton pore complex (components: a, c, c', c'', d, e, f and VOA1).

It is found in the vacuole membrane. Its function is as follows. Subunit of the V1 complex of vacuolar(H+)-ATPase (V-ATPase), a multisubunit enzyme composed of a peripheral complex (V1) that hydrolyzes ATP and a membrane integral complex (V0) that translocates protons. V-ATPase is responsible for acidifying and maintaining the pH of intracellular compartments. The polypeptide is V-type proton ATPase subunit D (vma-8) (Neurospora crassa (strain ATCC 24698 / 74-OR23-1A / CBS 708.71 / DSM 1257 / FGSC 987)).